The following is a 602-amino-acid chain: Serine/threonine-protein phosphatase 2A 56 kDa regulatory subunit delta isoform (602 aa).

A compositionally biased stretch (basic and acidic residues) spans 1-13 (MPYKLKKEKEPPK). The segment at 1–96 (MPYKLKKEKE…QSSSRFNLSK (96 aa)) is disordered. 5 tandem repeats follow at residues 37-38 (QP), 39-40 (QP), 41-42 (QP), 43-44 (QP), and 45-46 (QP). An 8 X 2 AA approximate tandem repeats of Q-P region spans residues 37 to 52 (QPQPQPQPQPQAQSQP). Low complexity predominate over residues 46 to 55 (PQAQSQPPSS). Residues 47–48 (QA) form a 6; approximate repeat. A 7; approximate repeat occupies 49–50 (QS). Residues 51 to 52 (QP) form repeat 8. A Phosphothreonine modification is found at threonine 63. Phosphoserine occurs at positions 88, 89, and 90. The SH3-binding; class I motif lies at 523 to 530 (RAPPPLPP). A Nuclear localization signal motif is present at residues 548–565 (KRTVETEAVQMLKDIKKE). Serine 573 and serine 598 each carry phosphoserine.

The protein belongs to the phosphatase 2A regulatory subunit B56 family. As to quaternary structure, PP2A consists of a common heterodimeric core enzyme, composed of a 36 kDa catalytic subunit (subunit C) and a 65 kDa constant regulatory subunit (PR65 or subunit A), that associates with a variety of regulatory subunits. Proteins that associate with the core dimer include three families of regulatory subunits B (the R2/B/PR55/B55, R3/B''/PR72/PR130/PR59 and R5/B'/B56 families), the 48 kDa variable regulatory subunit, viral proteins, and cell signaling molecules. Interacts with the PP2A A subunit PPP2R1A. Interacts with SGO1. Interacts with ADCY8. In terms of tissue distribution, isoform Delta-2 is widely expressed. Isoform Delta-1 is highly expressed in brain.

The protein resides in the cytoplasm. It is found in the nucleus. The B regulatory subunit might modulate substrate selectivity and catalytic activity, and might also direct the localization of the catalytic enzyme to a particular subcellular compartment. The protein is Serine/threonine-protein phosphatase 2A 56 kDa regulatory subunit delta isoform (PPP2R5D) of Homo sapiens (Human).